A 161-amino-acid polypeptide reads, in one-letter code: Vasotocin-neurophysin VT (161 aa).

Residues 1–19 (MAEPSLPLSFLCLLALSSA) form the signal peptide. A disulfide bridge connects residues cysteine 20 and cysteine 25. A Glycine amide modification is found at glycine 28. 7 disulfide bridges follow: cysteine 41–cysteine 85, cysteine 44–cysteine 58, cysteine 52–cysteine 75, cysteine 59–cysteine 65, cysteine 92–cysteine 104, cysteine 98–cysteine 116, and cysteine 105–cysteine 110.

Belongs to the vasopressin/oxytocin family. In terms of processing, seven disulfide bonds are present in neurophysin.

The protein resides in the secreted. Vasotocin is an antidiuretic hormone. This is Vasotocin-neurophysin VT from Gallus gallus (Chicken).